The primary structure comprises 440 residues: C4-dicarboxylate transport protein (440 aa).

Transmembrane regions (helical) follow at residues 15–35, 46–66, 78–98, 146–166, 190–210, 224–244, 291–311, 332–352, and 354–374; these read VLVA…TGVA, LIKM…IAGM, YALL…LVVV, AFAN…GFAL, IINM…AFTI, LMAC…GGIC, VVGL…SIYL, ITLL…TGSG, and IVLA…LALI. Residues 420–440 form a disordered region; it reads GAPLVDTRPTDDLGVAEGPAR.

The protein belongs to the dicarboxylate/amino acid:cation symporter (DAACS) (TC 2.A.23) family.

Its subcellular location is the cell inner membrane. Functionally, responsible for the transport of dicarboxylates such as succinate, fumarate, and malate from the periplasm across the membrane. This chain is C4-dicarboxylate transport protein, found in Pseudomonas putida (strain ATCC 700007 / DSM 6899 / JCM 31910 / BCRC 17059 / LMG 24140 / F1).